Here is a 385-residue protein sequence, read N- to C-terminus: Rubredoxin-NAD(+) reductase (385 aa).

FAD contacts are provided by residues 8-11 (AGTA), 32-33 (SR), Ile79, Glu156, Asp275, and Ile293.

Belongs to the FAD-dependent oxidoreductase family. As to quaternary structure, homodimer. Requires FAD as cofactor.

The protein resides in the cytoplasm. The enzyme catalyses 2 reduced [rubredoxin] + NAD(+) + H(+) = 2 oxidized [rubredoxin] + NADH. It functions in the pathway hydrocarbon metabolism; alkane degradation. Involved in the hydrocarbon hydroxylating system, which transfers electrons from NADH to rubredoxin reductase and then through rubredoxin to alkane 1 monooxygenase. This is Rubredoxin-NAD(+) reductase (alkT) from Pseudomonas putida (Arthrobacter siderocapsulatus).